The chain runs to 266 residues: Translation initiation factor 2 subunit alpha (266 aa).

One can recognise an S1 motif domain in the interval 10–81 (GELVVGKIDE…SAQQIDLSIK (72 aa)). Residues 233–266 (AEDALEESADRAAKVVEQHGGSGQFHRERSEDDE) are disordered. Composition is skewed to basic and acidic residues over residues 240–249 (SADRAAKVVE) and 257–266 (FHRERSEDDE).

It belongs to the eIF-2-alpha family. Heterotrimer composed of an alpha, a beta and a gamma chain.

Its function is as follows. eIF-2 functions in the early steps of protein synthesis by forming a ternary complex with GTP and initiator tRNA. The chain is Translation initiation factor 2 subunit alpha from Haloarcula marismortui (strain ATCC 43049 / DSM 3752 / JCM 8966 / VKM B-1809) (Halobacterium marismortui).